We begin with the raw amino-acid sequence, 594 residues long: Elongation factor 4 (594 aa).

Residues 2–184 form the tr-type G domain; that stretch reads KNIRNFSIIA…TIVAKVPAPE (183 aa). Residues 14–19 and 131–134 each bind GTP; these read DHGKST and NKID.

Belongs to the TRAFAC class translation factor GTPase superfamily. Classic translation factor GTPase family. LepA subfamily.

The protein localises to the cell inner membrane. The catalysed reaction is GTP + H2O = GDP + phosphate + H(+). Functionally, required for accurate and efficient protein synthesis under certain stress conditions. May act as a fidelity factor of the translation reaction, by catalyzing a one-codon backward translocation of tRNAs on improperly translocated ribosomes. Back-translocation proceeds from a post-translocation (POST) complex to a pre-translocation (PRE) complex, thus giving elongation factor G a second chance to translocate the tRNAs correctly. Binds to ribosomes in a GTP-dependent manner. This is Elongation factor 4 from Francisella tularensis subsp. tularensis (strain WY96-3418).